The primary structure comprises 312 residues: Olfactory receptor 6C68 (312 aa).

Residues 1–23 (MRKHTAITTFILLGLTEDPQLQV) are Extracellular-facing. Residues 24–44 (LLFMFLFITYMLSVTGKLTII) traverse the membrane as a helical segment. Residues 45–55 (ALTMLDPHLKT) are Cytoplasmic-facing. Residues 56 to 76 (PMYFFLQNLSFLEISFTATCV) traverse the membrane as a helical segment. Over 77 to 95 (PRFLYSISTGNKIITYNAC) the chain is Extracellular. A disulfide bond links C95 and C177. A helical transmembrane segment spans residues 96-116 (VIQLFFADLFGVTEFFLLATM). Residues 117–143 (SYDRYVAICKPLHYMAIMSNKVCKTMV) are Cytoplasmic-facing. A helical transmembrane segment spans residues 144-164 (ICCWMAALMIILPPLSLGFHL). The Extracellular segment spans residues 165 to 197 (EFCDSNVINHFGCDALPILKIPCSDTSLIEQMV). The helical transmembrane segment at 198-218 (VASAVLTFIITLVCVVLSYTY) threads the bilayer. Residues 219–239 (IIRTILKFPSVQQKKKAFSTC) are Cytoplasmic-facing. A helical membrane pass occupies residues 240–260 (SSHITVVSITYGSCIFIYIKP). At 261–271 (SAKEEVNINKG) the chain is on the extracellular side. A helical membrane pass occupies residues 272–292 (VSVLISSISPMLNSFIYTLRN). Topologically, residues 293 to 312 (EQVKQAFHDSLKKIAFRLKK) are cytoplasmic.

This sequence belongs to the G-protein coupled receptor 1 family.

It is found in the cell membrane. Its function is as follows. Odorant receptor. This chain is Olfactory receptor 6C68 (OR6C68), found in Homo sapiens (Human).